The sequence spans 870 residues: Eukaryotic translation initiation factor 3 subunit C (870 aa).

The segment at 1–92 is disordered; that stretch reads MSRFFRGDSS…GVKVVKSAKN (92 aa). Positions 14–54 are enriched in acidic residues; that stretch reads SSDEEEDLYSDDEEVQEQPEEESEEDDSEEDDDDDDSDSSS. In terms of domain architecture, PCI spans 608 to 782; sequence FHMHINLELL…SSIIFRKGVE (175 aa). Positions 807-870 are disordered; the sequence is TLETRTQGTA…ALGAAVGSRA (64 aa). Positions 824-844 are enriched in gly residues; sequence GRGGRGGNRGGRGGNRGGRGG.

It belongs to the eIF-3 subunit C family. Component of the eukaryotic translation initiation factor 3 (eIF-3) complex.

It is found in the cytoplasm. Component of the eukaryotic translation initiation factor 3 (eIF-3) complex, which is involved in protein synthesis of a specialized repertoire of mRNAs and, together with other initiation factors, stimulates binding of mRNA and methionyl-tRNAi to the 40S ribosome. The eIF-3 complex specifically targets and initiates translation of a subset of mRNAs involved in cell proliferation. The chain is Eukaryotic translation initiation factor 3 subunit C (nip1) from Sclerotinia sclerotiorum (strain ATCC 18683 / 1980 / Ss-1) (White mold).